The chain runs to 362 residues: Probable aromatic amino acid hydroxylase (362 aa).

The Fe cation site is built by His200 and His205.

Belongs to the biopterin-dependent aromatic amino acid hydroxylase family. Fe(2+) serves as cofactor.

The chain is Probable aromatic amino acid hydroxylase from Chlamydia pneumoniae (Chlamydophila pneumoniae).